The chain runs to 341 residues: L-threonine 3-dehydrogenase (341 aa).

C38 provides a ligand contact to Zn(2+). Active-site charge relay system residues include T40 and H43. Residues H63, E64, C93, C96, C99, and C107 each contribute to the Zn(2+) site. Residues I175, D195, R200, 262–264, and 286–287 contribute to the NAD(+) site; these read LGI and IY.

This sequence belongs to the zinc-containing alcohol dehydrogenase family. As to quaternary structure, homotetramer. Zn(2+) serves as cofactor.

The protein resides in the cytoplasm. It carries out the reaction L-threonine + NAD(+) = (2S)-2-amino-3-oxobutanoate + NADH + H(+). It functions in the pathway amino-acid degradation; L-threonine degradation via oxydo-reductase pathway; glycine from L-threonine: step 1/2. In terms of biological role, catalyzes the NAD(+)-dependent oxidation of L-threonine to 2-amino-3-ketobutyrate. In Shewanella frigidimarina (strain NCIMB 400), this protein is L-threonine 3-dehydrogenase.